A 165-amino-acid polypeptide reads, in one-letter code: MKELLAPVQAWWRSVTPREQKMVMGMGALTVLAIAYWGIWQPLSERTAQAQARLQTEKQLLSWVSENANDIVTLRAQGGSDAPSDQPLNQVITNSTRQFNIELIRVQPRGEMMQVWIQPLPFSQLVSWIAYLQERQGVSVDAIDIDRGKVNGVVEVKRLQLKRGG.

Residues 1-22 (MKELLAPVQAWWRSVTPREQKM) lie on the Cytoplasmic side of the membrane. A helical membrane pass occupies residues 23–43 (VMGMGALTVLAIAYWGIWQPL). Residues 44–165 (SERTAQAQAR…VKRLQLKRGG (122 aa)) are Periplasmic-facing.

It belongs to the GSP M family. As to quaternary structure, type II secretion system is composed of four main components: the outer membrane complex, the inner membrane complex, the cytoplasmic secretion ATPase and the periplasm-spanning pseudopilus. Forms homodimers. Interacts with EpsL/GspL. Interacts with EpsE/GspE. Interacts with EpsF/GspF.

It is found in the cell inner membrane. Its function is as follows. Inner membrane component of the type II secretion system required for the energy-dependent secretion of extracellular factors such as proteases and toxins from the periplasm. Plays a role in the complex assembly and recruits EpsL resulting in a stable complex in the inner membrane. Provides thus a link between the energy-providing EpsE protein in the cytoplasm and the rest of the T2SS machinery. This is Type II secretion system protein M (epsM) from Vibrio cholerae serotype O1 (strain ATCC 39315 / El Tor Inaba N16961).